Consider the following 461-residue polypeptide: Cysteine--tRNA ligase (461 aa).

Position 28 (Cys28) interacts with Zn(2+). The 'HIGH' region motif lies at 30 to 40; sequence VTIYDLCHIGH. Residues Cys211, His236, and Glu240 each contribute to the Zn(2+) site. Positions 268–272 match the 'KMSKS' region motif; that stretch reads KMSKS. Lys271 serves as a coordination point for ATP.

The protein belongs to the class-I aminoacyl-tRNA synthetase family. In terms of assembly, monomer. The cofactor is Zn(2+).

It localises to the cytoplasm. It catalyses the reaction tRNA(Cys) + L-cysteine + ATP = L-cysteinyl-tRNA(Cys) + AMP + diphosphate. The protein is Cysteine--tRNA ligase of Aliivibrio fischeri (strain ATCC 700601 / ES114) (Vibrio fischeri).